An 80-amino-acid chain; its full sequence is DNA-directed RNA polymerase RPB10 homolog (80 aa).

The Zn(2+) site is built by C7, C10, C65, and C66.

This sequence belongs to the archaeal RpoN/eukaryotic RPB10 RNA polymerase subunit family. Part of the viral DNA-directed RNA polymerase that consists of 8 polII-like subunits (RPB1, RPB2, RPB3, RPB5, RPB6, RPB7, RPB9, RPB10), a capping enzyme and a termination factor.

Its subcellular location is the host cytoplasm. Its function is as follows. Component of the DNA-directed RNA polymerase (RNAP) that catalyzes the transcription in the cytoplasm of viral DNA into RNA using the four ribonucleoside triphosphates as substrates. The protein is DNA-directed RNA polymerase RPB10 homolog of African swine fever virus (isolate Pig/Kenya/KEN-50/1950) (ASFV).